A 352-amino-acid chain; its full sequence is Molybdenum import ATP-binding protein ModC (352 aa).

One can recognise an ABC transporter domain in the interval 2-230 (MLEINVKKRL…PLFEPWQEQG (229 aa)). Residue 32–39 (GISGSGKS) coordinates ATP. Residues 290–352 (KTSIRNILSG…YAQIKAVSVM (63 aa)) enclose the Mop domain.

This sequence belongs to the ABC transporter superfamily. Molybdate importer (TC 3.A.1.8) family. The complex is composed of two ATP-binding proteins (ModC), two transmembrane proteins (ModB) and a solute-binding protein (ModA).

The protein localises to the cell inner membrane. It carries out the reaction molybdate(out) + ATP + H2O = molybdate(in) + ADP + phosphate + H(+). In terms of biological role, part of the ABC transporter complex ModABC involved in molybdenum import. Responsible for energy coupling to the transport system. The chain is Molybdenum import ATP-binding protein ModC from Mannheimia succiniciproducens (strain KCTC 0769BP / MBEL55E).